The primary structure comprises 73 residues: Translation initiation factor IF-1 (73 aa).

Residues 1-73 (MAKKDGVIEI…NRGRIVYRYR (73 aa)) form the S1-like domain.

The protein belongs to the IF-1 family. In terms of assembly, component of the 30S ribosomal translation pre-initiation complex which assembles on the 30S ribosome in the order IF-2 and IF-3, IF-1 and N-formylmethionyl-tRNA(fMet); mRNA recruitment can occur at any time during PIC assembly.

It is found in the cytoplasm. In terms of biological role, one of the essential components for the initiation of protein synthesis. Stabilizes the binding of IF-2 and IF-3 on the 30S subunit to which N-formylmethionyl-tRNA(fMet) subsequently binds. Helps modulate mRNA selection, yielding the 30S pre-initiation complex (PIC). Upon addition of the 50S ribosomal subunit IF-1, IF-2 and IF-3 are released leaving the mature 70S translation initiation complex. This Acidothermus cellulolyticus (strain ATCC 43068 / DSM 8971 / 11B) protein is Translation initiation factor IF-1.